The following is an 89-amino-acid chain: Putative defensin-like protein 40 (89 aa).

The first 26 residues, 1–26, serve as a signal peptide directing secretion; it reads MAGIANGVGLLISFMLICGGMPKGHA. 4 disulfide bridges follow: C33–C88, C46–C69, C55–C81, and C59–C83.

It belongs to the DEFL family.

It is found in the secreted. In Arabidopsis thaliana (Mouse-ear cress), this protein is Putative defensin-like protein 40.